The following is a 435-amino-acid chain: Thiosulfate sulfurtransferase YnjE (435 aa).

An N-terminal signal peptide occupies residues 1–23 (MKRVSQMTALAMALGLACASSWA). 3 Rhodanese domains span residues 36-138 (QQQN…RLQK), 164-270 (PAGD…PVER), and 304-425 (HRQD…NPVA). Cys385 functions as the Cysteine persulfide intermediate in the catalytic mechanism. A substrate-binding site is contributed by Arg390.

As to quaternary structure, monomer.

Its subcellular location is the periplasm. It catalyses the reaction thiosulfate + hydrogen cyanide = thiocyanate + sulfite + 2 H(+). This chain is Thiosulfate sulfurtransferase YnjE (ynjE), found in Escherichia coli (strain K12).